The primary structure comprises 222 residues: ATP synthase F(0) complex subunit a (222 aa).

6 consecutive transmembrane segments (helical) span residues 7 to 27 (AFFD…AILL), 64 to 84 (WSLM…LGLL), 93 to 113 (QLTV…ILGF), 132 to 152 (FLIP…PVTL), 160 to 180 (ITAG…LLSI), and 185 to 205 (ITVT…VALI).

This sequence belongs to the ATPase A chain family. Component of the ATP synthase complex composed at least of ATP5F1A/subunit alpha, ATP5F1B/subunit beta, ATP5MC1/subunit c (homooctomer), MT-ATP6/subunit a, MT-ATP8/subunit 8, ATP5ME/subunit e, ATP5MF/subunit f, ATP5MG/subunit g, ATP5MK/subunit k, ATP5MJ/subunit j, ATP5F1C/subunit gamma, ATP5F1D/subunit delta, ATP5F1E/subunit epsilon, ATP5PF/subunit F6, ATP5PB/subunit b, ATP5PD/subunit d, ATP5PO/subunit OSCP. ATP synthase complex consists of a soluble F(1) head domain (subunits alpha(3) and beta(3)) - the catalytic core - and a membrane F(0) domain - the membrane proton channel (subunits c, a, 8, e, f, g, k and j). These two domains are linked by a central stalk (subunits gamma, delta, and epsilon) rotating inside the F1 region and a stationary peripheral stalk (subunits F6, b, d, and OSCP). Interacts with DNAJC30; interaction is direct.

The protein resides in the mitochondrion inner membrane. The enzyme catalyses H(+)(in) = H(+)(out). In terms of biological role, subunit a, of the mitochondrial membrane ATP synthase complex (F(1)F(0) ATP synthase or Complex V) that produces ATP from ADP in the presence of a proton gradient across the membrane which is generated by electron transport complexes of the respiratory chain. ATP synthase complex consist of a soluble F(1) head domain - the catalytic core - and a membrane F(1) domain - the membrane proton channel. These two domains are linked by a central stalk rotating inside the F(1) region and a stationary peripheral stalk. During catalysis, ATP synthesis in the catalytic domain of F(1) is coupled via a rotary mechanism of the central stalk subunits to proton translocation. With the subunit c (ATP5MC1), forms the proton-conducting channel in the F(0) domain, that contains two crucial half-channels (inlet and outlet) that facilitate proton movement from the mitochondrial intermembrane space (IMS) into the matrix. Protons are taken up via the inlet half-channel and released through the outlet half-channel, following a Grotthuss mechanism. The chain is ATP synthase F(0) complex subunit a from Mammuthus primigenius (Siberian woolly mammoth).